Here is a 322-residue protein sequence, read N- to C-terminus: Corticotropin-releasing factor-binding protein (322 aa).

Residues 1-24 (MSPNFKLQCHFTLILLTALRGESR) form the signal peptide. 5 disulfide bridges follow: C60-C81, C104-C141, C183-C205, C237-C264, and C277-C318. A glycan (N-linked (GlcNAc...) asparagine) is linked at N204.

This sequence belongs to the CRF-binding protein family.

Its subcellular location is the secreted. In terms of biological role, binds CRF and inactivates it. May prevent inappropriate pituitary-adrenal stimulation in pregnancy. This Rattus norvegicus (Rat) protein is Corticotropin-releasing factor-binding protein (Crhbp).